Consider the following 186-residue polypeptide: MKMEVIFKTDLRSSSQVVFHAGSLYNWFSVEIINSGRIVTTAIKTLLSTVKYDIVKSARIYAGQGYTEHQAQEEWNMILHVLFEEETESSASSESIHEKNDNGTNECTSSFETLFEQEPSSEVPKDSKLYMLAQKTVQHIEQYGKAPDFNKVIRAHNFIQTIHGTPLKEEEKEVVRLMVIKLLKKK.

The protein belongs to the asfivirus phosphoprotein p30 family. In terms of assembly, oligomer. Interacts with host HNRNPK. In terms of processing, phosphorylated on serine residues in the 115 N-terminal amino acids.

It is found in the host cytoplasm. It localises to the host nucleus. Its subcellular location is the virion. Its function is as follows. Modifies the subcellular distribution of heterogeneous nuclear ribonucleoprotein K (HNRNPK) and may contribute to modulate HNRNPK functions related to processing and export of mRNAs during ASFV infection. Necessary for virus internalization. This chain is Phosphoprotein p30, found in African swine fever virus (isolate Tick/South Africa/Pretoriuskop Pr4/1996) (ASFV).